The chain runs to 152 residues: UPF0225 protein YchJ (152 aa).

This sequence belongs to the UPF0225 family.

The chain is UPF0225 protein YchJ (ychJ) from Salmonella typhimurium (strain LT2 / SGSC1412 / ATCC 700720).